The sequence spans 725 residues: Catalase-peroxidase (725 aa).

Polar residues-rich tracts occupy residues 1-12 (MSTSNDPSNNAS) and 23-32 (PKQSAGSGTA). A signal peptide spans 1-20 (MSTSNDPSNNASAGKCPFHA). Positions 1-35 (MSTSNDPSNNASAGKCPFHAETPKQSAGSGTANRD) are disordered. A cross-link (tryptophyl-tyrosyl-methioninium (Trp-Tyr) (with M-252)) is located at residues 105–226 (WHGAGTYRTV…IGATEMGLIY (122 aa)). The active-site Proton acceptor is the His106. Positions 226-252 (YVNPEGPNASGEPLSAAAAIRATFGNM) form a cross-link, tryptophyl-tyrosyl-methioninium (Tyr-Met) (with W-105). A heme b-binding site is contributed by His267.

The protein belongs to the peroxidase family. Peroxidase/catalase subfamily. In terms of assembly, homodimer or homotetramer. The cofactor is heme b. Formation of the three residue Trp-Tyr-Met cross-link is important for the catalase, but not the peroxidase activity of the enzyme.

The enzyme catalyses H2O2 + AH2 = A + 2 H2O. The catalysed reaction is 2 H2O2 = O2 + 2 H2O. Bifunctional enzyme with both catalase and broad-spectrum peroxidase activity. The sequence is that of Catalase-peroxidase from Klebsiella pneumoniae subsp. pneumoniae (strain ATCC 700721 / MGH 78578).